The sequence spans 409 residues: N-carbamoyl-L-amino acid amidohydrolase (409 aa).

Positions 79, 90, 125, and 189 each coordinate a divalent metal cation. 5 residues coordinate an N-carbamoyl-L-alpha-amino acid: glutamine 192, histidine 225, asparagine 273, arginine 286, and alanine 355. Residues 208–325 are involved in dimerization; that stretch reads GIAGLIWVKF…TTERLQEMAP (118 aa). Histidine 380 contacts a divalent metal cation.

This sequence belongs to the peptidase M20 family. Homodimer. Mn(2+) serves as cofactor. The cofactor is Ni(2+). Co(2+) is required as a cofactor. Requires Fe(2+) as cofactor.

It carries out the reaction an N-carbamoyl-L-alpha-amino acid + H2O + 2 H(+) = an L-alpha-amino acid + NH4(+) + CO2. It catalyses the reaction N-carbamoyl-L-methionine + H2O + 2 H(+) = L-methionine + NH4(+) + CO2. The catalysed reaction is N-acetyl-L-methionine + H2O = L-methionine + acetate. The enzyme catalyses N-carbamoyl-L-alanine + H2O + 2 H(+) = L-alanine + NH4(+) + CO2. It carries out the reaction N-carbamoyl-L-glutamate + H2O + 2 H(+) = L-glutamate + NH4(+) + CO2. It catalyses the reaction N-carbamoylglycine + H2O + 2 H(+) = glycine + NH4(+) + CO2. The catalysed reaction is N-carbamoyl-L-leucine + H2O + 2 H(+) = L-leucine + NH4(+) + CO2. In terms of biological role, catalyzes the hydrolysis of aliphatic N-carbamoyl-L-alpha-amino acids to free L-alpha-amino acids. Is strictly L-specific since it is inactive toward N-carbamoyl-D-alpha-amino acids. Is not able to use aromatic N-carbamoyl-L-alpha-amino acids like N-carbamoyl-L-tryptophan and N-carbamoyl-L-phenylalanine as substrates, but is also able to hydrolyze N-acetyl-L-methionine. The protein is N-carbamoyl-L-amino acid amidohydrolase of Geobacillus stearothermophilus (Bacillus stearothermophilus).